We begin with the raw amino-acid sequence, 232 residues long: Zinc-finger homeodomain protein 5 (232 aa).

Positions 1–11 are enriched in acidic residues; that stretch reads MELSEHEEDAG. A disordered region spans residues 1 to 25; sequence MELSEHEEDAGDVGGGCSSPPTPPH. Residues 40–86 form a ZF-HD dimerization-type; degenerate zinc finger; it reads YHECLRNHAAASGGHVVDGCGEFMPASTEEPLACAACGCHRSFHRRD. The disordered stretch occupies residues 126-170; it reads GLPFPGYGTPSGGTGTTTASSSDERLRPSPVQPRRRSRTTFTREQ. A DNA-binding region (homeobox) is located at residues 159 to 222; sequence RRRSRTTFTR…NNKHSFKQKQ (64 aa).

Homo- and heterodimer with other ZFHD proteins.

It is found in the nucleus. Functionally, putative transcription factor. This Oryza sativa subsp. indica (Rice) protein is Zinc-finger homeodomain protein 5 (ZHD5).